We begin with the raw amino-acid sequence, 1584 residues long: Adhesion G protein-coupled receptor B1 (1584 aa).

A signal peptide spans 1–30; sequence MRGQAAAPGPVWILAPLLLLLLLLGRRARA. The Extracellular segment spans residues 31–948; the sequence is AAGADAGPGP…ANMEKATLPS (918 aa). N64 carries N-linked (GlcNAc...) asparagine glycosylation. The tract at residues 146–167 is disordered; that stretch reads RRQQPPQHDGLRPRAGPPGPTD. In terms of domain architecture, TSP type-1 1 spans 261-315; sequence TGGWKLWSLWGECTRDCGGGLQTRTRTCLPAPGVEGGGCEGVLEEGRQCNREACG. 3 cysteine pairs are disulfide-bonded: C273–C309, C277–C314, and C288–C299. The segment at 313-335 is disordered; sequence ACGPAGRTSSRSQSLRSTDARRR. Residues 319 to 329 are compositionally biased toward low complexity; it reads RTSSRSQSLRS. 4 consecutive TSP type-1 domains span residues 354–407, 409–462, 467–520, and 522–575; these read DPAA…AVCP, HGAW…ALCP, DGNW…QQCP, and DGKW…QRCP. Cystine bridges form between C366/C400, C370/C406, C381/C390, C421/C456, C425/C461, C436/C446, C479/C514, C483/C519, C494/C504, C534/C569, C538/C574, C549/C559, C581/C616, and C604/C634. Residue N401 is glycosylated (N-linked (GlcNAc...) asparagine). N607 carries N-linked (GlcNAc...) asparagine glycosylation. At T609 the chain carries Phosphothreonine. N-linked (GlcNAc...) asparagine glycosylation is found at N692, N844, N877, and N881. Positions 760-939 constitute a GAIN-B domain; the sequence is RDAYQVTDNL…AILAQLSADA (180 aa). Disulfide bonds link C884–C921 and C909–C923. Positions 884–939 are GPS; the sequence is CILWDETDVPSSSAPPQLGPWSWRGCRTVPLDALRTRCLCDRLSTFAILAQLSADA. Positions 927–943 are N-terminal stalk following vasculostatin-120 cleavage which is not required for signaling activity; that stretch reads STFAILAQLSADANMEK. Residues 949–969 traverse the membrane as a helical segment; that stretch reads VTLIVGCGVSSLTLLMLVIIY. At 970 to 980 the chain is on the cytoplasmic side; that stretch reads VSVWRYIRSER. A helical transmembrane segment spans residues 981-1001; the sequence is SVILINFCLSIISSNALILIG. Residues 1002–1008 lie on the Extracellular side of the membrane; the sequence is QTQTRNK. A helical transmembrane segment spans residues 1009–1029; that stretch reads VVCTLVAAFLHFFFLSSFCWV. Residues 1030–1052 are Cytoplasmic-facing; that stretch reads LTEAWQSYMAVTGHLRNRLIRKR. A helical transmembrane segment spans residues 1053 to 1073; it reads FLCLGWGLPALVVAISVGFTK. Residues 1074-1093 are Extracellular-facing; the sequence is AKGYSTMNYCWLSLEGGLLY. Residues 1094-1114 form a helical membrane-spanning segment; the sequence is AFVGPAAAVVLVNMVIGILVF. Residues 1115 to 1136 are Cytoplasmic-facing; sequence NKLVSKDGITDKKLKERAGASL. Residues 1137-1157 form a helical membrane-spanning segment; the sequence is WSSCVVLPLLALTWMSAVLAV. Topologically, residues 1158–1166 are extracellular; the sequence is TDRRSALFQ. A helical membrane pass occupies residues 1167–1187; the sequence is ILFAVFDSLEGFVIVMVHCIL. Over 1188-1584 the chain is Cytoplasmic; sequence RREVQDAVKC…QDIIDLQTEV (397 aa). The interval 1365–1584 is involved in interaction with MAGI1; sequence YSIHIDQMPQ…QDIIDLQTEV (220 aa). 2 disordered regions span residues 1385–1475 and 1501–1548; these read EASL…RRKS and RKLQ…KKEL. Positions 1391–1439 are enriched in pro residues; the sequence is RSPPSRQPPSGGPPEAPPAQPPPPPPPPPPPPQQPLPPPPNLEPAPPSL. Over residues 1453–1469 the composition is skewed to polar residues; it reads TGPSTKNENVATLSVSS. The residue at position 1469 (S1469) is a Phosphoserine. Over residues 1501-1522 the composition is skewed to basic and acidic residues; that stretch reads RKLQHAAEKDKEVLGPDSKPEK. Residues 1581 to 1584 are indispensable for interaction with MAGI1; it reads QTEV.

It belongs to the G-protein coupled receptor 2 family. LN-TM7 subfamily. Interacts with ELMO1 and DOCK. When bound to ELMO1 and DOCK1, acts as a module to promote apoptotic cell engulfment. Interacts with MDM2; the interaction results in inhibition of MDM2-mediated ubiquitination and degradation of DLG4/PSD95. Interacts with PARD3 and TIAM1; the interaction is required for correct dendritic. localization of PARD3 and TIAM1 and for dendritic spine formation. Interacts with MAGI1. Interacts with MAGI3. Interacts with BAIAP2. Interacts with PHYHIP. Interacts with DLG4 (via PDZ domain). Vasculostatin-120: Interacts with CD36. Vasculostatin-120: Interacts with ARRB2. Interacts with BAIAP3; this interaction is direct. Post-translationally, proteolytically cleaved to produce vasculostatin-40 and vasculostatin-120. Vasculostatin-40 is the major form and is produced through proteolytic cleavage by MMP14 between residues 321 and 329 with cleavage likely to be between Ser-326 and Leu-327. In terms of processing, ubiquitinated. Expressed in brain (at protein level). Expressed on mononuclear phagocytes and monocyte-derived macrophages in the gastric mucosa (at protein level). Expressed in normal pancreatic tissue but not in pancreatic tumor tissue. Reduced or no expression is observed in some glioblastomas.

The protein localises to the cell membrane. The protein resides in the cell projection. Its subcellular location is the phagocytic cup. It localises to the cell junction. It is found in the focal adhesion. The protein localises to the dendritic spine. The protein resides in the postsynaptic density. Its subcellular location is the secreted. Functionally, phosphatidylserine receptor which enhances the engulfment of apoptotic cells. Also mediates the binding and engulfment of Gram-negative bacteria. Stimulates production of reactive oxygen species by macrophages in response to Gram-negative bacteria, resulting in enhanced microbicidal macrophage activity. In the gastric mucosa, required for recognition and engulfment of apoptotic gastric epithelial cells. Promotes myoblast fusion. Activates the Rho pathway in a G-protein-dependent manner. Inhibits MDM2-mediated ubiquitination and degradation of DLG4/PSD95, promoting DLG4 stability and regulating synaptic plasticity. Required for the formation of dendritic spines by ensuring the correct localization of PARD3 and TIAM1. Potent inhibitor of angiogenesis in brain and may play a significant role as a mediator of the p53/TP53 signal in suppression of glioblastoma. Inhibits angiogenesis in a CD36-dependent manner. In terms of biological role, inhibits angiogenesis. The polypeptide is Adhesion G protein-coupled receptor B1 (Homo sapiens (Human)).